The sequence spans 559 residues: MEDPKSDEKFDIGISEKNLDVGFGESSSVDVPVKGRFASFLKKLELSSGPEKENIDLRPTPPDRRHYSALDIIYLWSCNGISASAFRTGTSYMEMGLSPKQALAALIAGNVFIAMPMTLNGLFGSHYHIPFAVQSRASFGYYFNTLIILLRFIAGLFYYGTNVYTGAECVQTILYAIFKSFRSYKNRLPADAGITSDFLISYFVYWVISFPFHLIRPEYLQRFFLIKSISTYIACFAMLIFLLCNVGSHVVWDQPATVSGRSWSWVFMCALNSSVAGFSTLAVNVNDFTRYVKHPKTPYVQMLILPLVAAVSAPIGIVSGVASKIMYGTAMWDPLQIANNWTSRGGRAAAFFMGLTYLVSMIAQNISDNTVAAANDLLYFFPRYLDIRRAQVIVIIIGAWAIVPWKILQNGTAFLAFLGSLSIFLGPAAGIFVADKFKNHHKYDIDEFYNPSGIYRYNKLGLNWRALIAFLCACVPLIPGMAMSINPSITMPDGVIHLYYIGYFYSFMTAFLIYWGLNLVFPAKETLLEEAVYPPKSNAELVDPSTLSGKDKFWYYIDY.

Transmembrane regions (helical) follow at residues 103–123 (LAAL…NGLF), 139–159 (FGYY…LFYY), 192–212 (AGIT…SFPF), 223–243 (FFLI…IFLL), 263–283 (WSWV…TLAV), 302–322 (MLIL…SGVA), 348–368 (AAAF…NISD), 387–407 (IRRA…PWKI), 413–434 (AFLA…IFVA), 466–486 (ALIA…MSIN), and 501–521 (IGYF…NLVF).

This sequence belongs to the purine-cytosine permease (2.A.39) family.

Its subcellular location is the golgi apparatus membrane. This is an uncharacterized protein from Schizosaccharomyces pombe (strain 972 / ATCC 24843) (Fission yeast).